A 73-amino-acid polypeptide reads, in one-letter code: Beta-defensin 50 (73 aa).

Positions 1–23 (MKTLHLLLLISGLLSVFVKGVGS) are cleaved as a signal peptide. Disulfide bonds link Cys-34/Cys-63 and Cys-46/Cys-64.

This sequence belongs to the beta-defensin family.

Its subcellular location is the secreted. Its function is as follows. Has bactericidal activity. The protein is Beta-defensin 50 (Defb50) of Rattus norvegicus (Rat).